The following is a 526-amino-acid chain: Protein spinster homolog 1 (526 aa).

A disordered region spans residues 1–44 (MTSRRSHGDVTPFLTQADNTEEEGVRDPESQSSDEEEEEGKDHG). 12 helical membrane passes run 59–79 (VIIVIILFYINLLNYMDRFTV), 98–118 (GLVQTVFICSYMFLAPVFGYL), 126–146 (LIMCVGISFWSLVTLLSSFVS), 159–179 (LVGVGEASYSTIAPTIIADLF), 187–207 (MLSFFYFATPVGCGLGYIVGS), 218–238 (WALRVTPGLGLLAVLLLIFVA), 272–292 (FILSTFGFTTVAFVTGALALW), 321–341 (MIFGGITCITGILGVLTGVEI), 355–375 (LVCAVGMISSAPFLFLSLAFA), 384–404 (VFIFIGETLLSLNWALVADIL), 419–439 (LQIVVSHLLGDAGSPYLIGVI), and 463–483 (MICAFVGVIGGGFFLTTALFI).

It belongs to the major facilitator superfamily. Spinster (TC 2.A.1.49) family.

It localises to the lysosome membrane. It carries out the reaction a 1-acyl-sn-glycero-3-phosphocholine(out) + H(+)(out) = a 1-acyl-sn-glycero-3-phosphocholine(in) + H(+)(in). The catalysed reaction is a 1-acyl-sn-glycero-3-phosphoethanolamine(out) + H(+)(out) = a 1-acyl-sn-glycero-3-phosphoethanolamine(in) + H(+)(in). It catalyses the reaction a 1-O-(1Z-alkenyl)-sn-glycero-3-phosphocholine(out) + H(+)(out) = a 1-O-(1Z-alkenyl)-sn-glycero-3-phosphocholine(in) + H(+)(in). The enzyme catalyses a 1-O-(1Z-alkenyl)-sn-glycero-3-phosphoethanolamine(out) + H(+)(out) = a 1-O-(1Z-alkenyl)-sn-glycero-3-phosphoethanolamine(in) + H(+)(in). Functionally, mediates the rate-limiting, proton-dependent, lysosomal efflux of lysophospholipids. Selective for zwitterionic headgroups such as lysophosphatidylcholine (LPC) and lysophosphatidylethanolamine (LPE). Essential player in lysosomal homeostasis. The chain is Protein spinster homolog 1 (spns1) from Xenopus laevis (African clawed frog).